A 422-amino-acid polypeptide reads, in one-letter code: Elongation factor 1-gamma (422 aa).

The GST N-terminal domain maps to 1 to 82 (MALVLHAGKT…YVARLKADNP (82 aa)). The 129-residue stretch at 87 to 215 (SLIDYAHIEQ…VKQTESVPPV (129 aa)) folds into the GST C-terminal domain. A disordered region spans residues 210 to 269 (ESVPPVPSAKKPSQPKETKSKAKEEPKKEAKKEPAKPKAEAAEEVEEAPKPKPKNPLDLL). Residues 223–250 (QPKETKSKAKEEPKKEAKKEPAKPKAEA) are compositionally biased toward basic and acidic residues. The region spanning 262–422 (PKNPLDLLPP…EALLDAKCFK (161 aa)) is the EF-1-gamma C-terminal domain.

As to quaternary structure, EF-1 is composed of four subunits: alpha, beta, delta, and gamma.

Its function is as follows. Probably plays a role in anchoring the complex to other cellular components. In Prunus avium (Cherry), this protein is Elongation factor 1-gamma.